The primary structure comprises 252 residues: Type III pantothenate kinase (252 aa).

6-13 serves as a coordination point for ATP; sequence DIGNTSTA. 104 to 107 contributes to the substrate binding site; sequence GADR. Aspartate 106 acts as the Proton acceptor in catalysis. Aspartate 128 is a binding site for K(+). Threonine 131 lines the ATP pocket. Substrate is bound at residue threonine 183.

The protein belongs to the type III pantothenate kinase family. Homodimer. NH4(+) serves as cofactor. The cofactor is K(+).

The protein resides in the cytoplasm. It carries out the reaction (R)-pantothenate + ATP = (R)-4'-phosphopantothenate + ADP + H(+). The protein operates within cofactor biosynthesis; coenzyme A biosynthesis; CoA from (R)-pantothenate: step 1/5. In terms of biological role, catalyzes the phosphorylation of pantothenate (Pan), the first step in CoA biosynthesis. The chain is Type III pantothenate kinase from Thermus thermophilus (strain ATCC BAA-163 / DSM 7039 / HB27).